The chain runs to 110 residues: Protein ripply3 (110 aa).

The WRPW motif motif lies at 18–21 (WRPW). The segment at 50-85 (HPVRLFLPRSRMQEYLSRLGSSVLASFPVQATLHFY) is ripply homology domain. Residues 87 to 99 (DEDSSSEEEEDEE) are compositionally biased toward acidic residues. The segment at 87 to 110 (DEDSSSEEEEDEEHANTRCRLWRP) is disordered.

It belongs to the ripply family.

The protein resides in the nucleus. In terms of biological role, probable transcriptional regulator involved in developmental processes. This Danio rerio (Zebrafish) protein is Protein ripply3 (ripply3).